Reading from the N-terminus, the 277-residue chain is Phosphonates import ATP-binding protein PhnC (277 aa).

Residues 3–251 (IKLDKVSARH…RLQALYAQHL (249 aa)) enclose the ABC transporter domain. Residue 40–47 (GPSGAGKT) coordinates ATP.

This sequence belongs to the ABC transporter superfamily. Phosphonates importer (TC 3.A.1.9.1) family. In terms of assembly, the complex is composed of two ATP-binding proteins (PhnC), two transmembrane proteins (PhnE) and a solute-binding protein (PhnD).

The protein localises to the cell inner membrane. The enzyme catalyses phosphonate(out) + ATP + H2O = phosphonate(in) + ADP + phosphate + H(+). Part of the ABC transporter complex PhnCDE involved in phosphonates import. Responsible for energy coupling to the transport system. This is Phosphonates import ATP-binding protein PhnC from Polaromonas sp. (strain JS666 / ATCC BAA-500).